The following is a 604-amino-acid chain: Rhotekin-2 (604 aa).

One can recognise an REM-1 domain in the interval 1–74 (MEGQLLRGLA…LQKSKEEIAN (74 aa)). Positions 53–79 (VCSARIQAYTAELQKSKEEIANQTGAR) form a coiled coil. The 107-residue stretch at 281-387 (ADAFAGFLNE…WMGAFRQHFF (107 aa)) folds into the PH domain. The segment at 481 to 590 (LSPIGEPAPD…PVPVPRQKSI (110 aa)) is disordered. The segment covering 514–527 (GRANQSKDSATQAG) has biased composition (polar residues). A compositionally biased stretch (low complexity) spans 529–543 (SGASSSPSDPRLSPP).

In terms of biological role, may play an important role in lymphopoiesis. This Mus musculus (Mouse) protein is Rhotekin-2 (Rtkn2).